Consider the following 537-residue polypeptide: MYSNDDYAEGGYEEYGYEMAADDGYDRSFYPMHEDVKKFLVYFCSVIKGGVVYEIQNLYENTFPKLSEQHFEKKAWPSEDEVAHLVDNDNLFMILYKELYYRHLHARIQGGPSLEQRLNSFYNYCNFFNYILPSKEPVQLELPDIWLWELIDEFVYQFQNFAQYRARLTDKSDEEMDMLLNNNSKVWNILCILNVLHSLVSMSKIKDQLEAAAAGRDPEEVAGEFGRHSFYKMLGYFSLVGLLRVHSLLGDYHQAIKVLEPIELHKKSQYSHIPACQISTSYYVGFAYMMMRRYSDAIRTFSSILLYIQRTKQLYSARSYQNDQINKQTDQMYHLLAICLVLHPQCIDESIQQVLREKNYHDNMYKMQCGDLDTFRNFFVFACPKFVSPVPPPSDAPLDDYVKEALEHQTNVFMDEVRQQQELPTIRSYLKLYTTLPLLKLASFMDHIPQDEIGEQKIENLLTHLLCFKHKMKNIVWTKGASGLEGKFQSGSELDFYIDKDMIHIADTKVSHRYGDFFIRKILKFEDLNRRLHNLKG.

The 213-residue stretch at 300–512 (TFSSILLYIQ…IHIADTKVSH (213 aa)) folds into the PCI domain.

Belongs to the eIF-3 subunit L family. Component of the eukaryotic translation initiation factor 3 (eIF-3) complex.

The protein localises to the cytoplasm. Functionally, component of the eukaryotic translation initiation factor 3 (eIF-3) complex, which is involved in protein synthesis of a specialized repertoire of mRNAs and, together with other initiation factors, stimulates binding of mRNA and methionyl-tRNAi to the 40S ribosome. The eIF-3 complex specifically targets and initiates translation of a subset of mRNAs involved in cell proliferation. This is Eukaryotic translation initiation factor 3 subunit L from Culex quinquefasciatus (Southern house mosquito).